We begin with the raw amino-acid sequence, 618 residues long: MGSSQEEGLPCQPSQPDHDTGGHGGPDLEGAGRVSTTPGPPGLLTSHPPADSDDTDATGPPAALLEGLLLGDGKPSPHSTRPGPFFYIGGNNGAAIISSYCKSKGWRRIQDSRREDYVLKWCEVKSRDSYGSFREGEQLLYQLPNNKLLTTKIGLLSTLRGRAWAMSKASKAPGGTQARLGKDATAPTLEDLPWTSPGHLRPQRVLRMEEFFPETYRLDLKHEREAFFTLFDETQIWICKPTASNQGKGIFLLRNQEEVAALQAKTRRAEDDPIHHKSPFRGPQARVVQRYIQNPLLLDGRKFDVRSYLLIACTTPYMIFFSHGYARLTLSLYDPHSSDLSGHLTNQFMQKKSPLYVLLKEDTVWSMERLNRYINTTFWKARGLPKDWVFTTLTKRMQQIMAHCFLAAKSKLECKLGYFDLIGCDFLIDDNFKVWLLEMNSNPALHTNCEVLKEVIPGVVIETLDLALETFQKSLRGQKMLPLLSQRRFVLLHNGEADVWPRLGGSCSLRRRLPPPTRQAKSSGPPTPRAPDQPGTRRPVPPPLAPQRPQLPGPSPDPDSAHDGQPQAPGTGDRHPEQEPSPGTAKEEREEPENARPWGGHPRPTPHAPATLPAFRDL.

The disordered stretch occupies residues 1 to 76 (MGSSQEEGLP…GLLLGDGKPS (76 aa)). Low complexity predominate over residues 57 to 74 (ATGPPAALLEGLLLGDGK). A TTL domain is found at 82-479 (PGPFFYIGGN…TFQKSLRGQK (398 aa)). ATP is bound by residues K240, 246–247 (QG), 289–292 (QRYI), 302–304 (KFD), and 345–346 (TN). Q246 contributes to the a protein binding site. Mg(2+)-binding residues include D425, E438, and N440. Residues 503–618 (LGGSCSLRRR…PATLPAFRDL (116 aa)) form a disordered region. Pro residues predominate over residues 539–557 (PVPPPLAPQRPQLPGPSPD). Residues 585 to 594 (AKEEREEPEN) are compositionally biased toward basic and acidic residues.

Requires Mg(2+) as cofactor.

The protein resides in the cytoplasm. It is found in the cytoskeleton. Its subcellular location is the cell projection. It localises to the cilium. The protein localises to the cilium axoneme. It carries out the reaction (glycyl)(n)-glycyl-L-glutamyl-[protein] + glycine + ATP = (glycyl)(n+1)-glycyl-L-glutamyl-[protein] + ADP + phosphate + H(+). Its function is as follows. Polyglycylase which modifies both tubulin and non-tubulin proteins, generating polyglycine side chains of variable lengths on the gamma-carboxyl groups of specific glutamate residues of target proteins. Involved in the elongation step rather than the initiation step of the polyglycylation reaction. Polyglycylates alpha-tubulin and beta-tubulin. Polyglycylates non-tubulin proteins such as nucleosome assembly protein NAP1. This chain is Protein polyglycylase TTLL10 (TTLL10), found in Macaca fascicularis (Crab-eating macaque).